A 277-amino-acid polypeptide reads, in one-letter code: 2-dehydro-3-deoxyphosphooctonate aldolase (277 aa).

The protein belongs to the KdsA family.

The protein resides in the cytoplasm. The catalysed reaction is D-arabinose 5-phosphate + phosphoenolpyruvate + H2O = 3-deoxy-alpha-D-manno-2-octulosonate-8-phosphate + phosphate. It functions in the pathway carbohydrate biosynthesis; 3-deoxy-D-manno-octulosonate biosynthesis; 3-deoxy-D-manno-octulosonate from D-ribulose 5-phosphate: step 2/3. Its pathway is bacterial outer membrane biogenesis; lipopolysaccharide biosynthesis. In Brucella anthropi (strain ATCC 49188 / DSM 6882 / CCUG 24695 / JCM 21032 / LMG 3331 / NBRC 15819 / NCTC 12168 / Alc 37) (Ochrobactrum anthropi), this protein is 2-dehydro-3-deoxyphosphooctonate aldolase.